The following is a 518-amino-acid chain: Cytochrome P450 82E3 (518 aa).

The chain crosses the membrane as a helical span at residues 2–22 (VFPVEAIVGLVTFTFLFYFLW). Residue Lys-254 forms a Glycyl lysine isopeptide (Lys-Gly) (interchain with G-Cter in ubiquitin) linkage. A heme-binding site is contributed by Cys-458.

Belongs to the cytochrome P450 family. CYP82E2 subfamily. The cofactor is heme. Expressed at low levels in green leaves.

It is found in the membrane. The protein operates within alkaloid biosynthesis; nicotine biosynthesis. Functionally, no nicotine N-demethylase activity. This Nicotiana tabacum (Common tobacco) protein is Cytochrome P450 82E3.